Reading from the N-terminus, the 522-residue chain is MWPQPRLPPHPAMSEKTQQGKLAAAKKKLKAYWQRKSPGIPAGANRKKKVNGSSPDTATSGGYHSPGDSATGIYGEGRASSTTLQDLESQYQELAVALDSSSAIISQLTENINSLVRTSKEEKKHEIHLVQKLGRSLFKLKNQTAEPLAPEPPAGPSKVEQLQDETNHLRKELESVGRQLQAEVENNQMLSLLNRRQEERLREQEERLHEQEERLHEQEERLCEQEERLREQEERLCEQEERLREQEERLCEQEERLREQEERLCEQEERLREQEERLREQEERLCEQEERLCEQEERLREQEERLCEQEERLCEQEERLCEQEKLPGQERLLEEVEKLLEQERRQEEQERLLERERLLDEVEELLEQERLRQQDERLWQQETLRELERLRELERLRELERMLELGWEALYEQRAEPRSGFEELNNENKSTLQLEQQVKELEKSGGAEEPRGSESAAAARPVPGAPVPQGAWMCGQAGWTPQEHPGLSGEAVGTGEAAGGAEEAACHSFRAAENRELNITII.

Over residues 1–11 (MWPQPRLPPHP) the composition is skewed to pro residues. Residues 1–77 (MWPQPRLPPH…DSATGIYGEG (77 aa)) form a disordered region. The span at 51-62 (NGSSPDTATSGG) shows a compositional bias: polar residues. A coiled-coil region spans residues 157-328 (SKVEQLQDET…RLCEQEKLPG (172 aa)). Basic and acidic residues predominate over residues 439-452 (KELEKSGGAEEPRG). The interval 439-503 (KELEKSGGAE…TGEAAGGAEE (65 aa)) is disordered. Low complexity-rich tracts occupy residues 456 to 471 (AAAA…PQGA) and 489 to 503 (GEAV…GAEE).

The protein belongs to the GOLGA6 family.

The chain is Golgin subfamily A member 6-like protein 10 from Homo sapiens (Human).